Here is a 489-residue protein sequence, read N- to C-terminus: Glutamate--tRNA ligase (489 aa).

Positions 12 to 22 match the 'HIGH' region motif; the sequence is PSPTGIPHVGM. The 'KMSKS' region signature appears at 256 to 260; the sequence is KLSKR. Lysine 259 provides a ligand contact to ATP.

Belongs to the class-I aminoacyl-tRNA synthetase family. Glutamate--tRNA ligase type 1 subfamily. Monomer.

It localises to the cytoplasm. The enzyme catalyses tRNA(Glu) + L-glutamate + ATP = L-glutamyl-tRNA(Glu) + AMP + diphosphate. In terms of biological role, catalyzes the attachment of glutamate to tRNA(Glu) in a two-step reaction: glutamate is first activated by ATP to form Glu-AMP and then transferred to the acceptor end of tRNA(Glu). In Mycobacterium ulcerans (strain Agy99), this protein is Glutamate--tRNA ligase.